The sequence spans 197 residues: Imidazoleglycerol-phosphate dehydratase (197 aa).

The protein belongs to the imidazoleglycerol-phosphate dehydratase family.

The protein localises to the cytoplasm. It catalyses the reaction D-erythro-1-(imidazol-4-yl)glycerol 3-phosphate = 3-(imidazol-4-yl)-2-oxopropyl phosphate + H2O. It participates in amino-acid biosynthesis; L-histidine biosynthesis; L-histidine from 5-phospho-alpha-D-ribose 1-diphosphate: step 6/9. This is Imidazoleglycerol-phosphate dehydratase from Syntrophobacter fumaroxidans (strain DSM 10017 / MPOB).